Here is a 558-residue protein sequence, read N- to C-terminus: Dihydroxy-acid dehydratase (558 aa).

Position 50 (Cys-50) interacts with [2Fe-2S] cluster. Position 82 (Asp-82) interacts with Mg(2+). Cys-123 serves as a coordination point for [2Fe-2S] cluster. Asp-124 and Lys-125 together coordinate Mg(2+). At Lys-125 the chain carries N6-carboxylysine. Cys-195 lines the [2Fe-2S] cluster pocket. Glu-447 contacts Mg(2+). The active-site Proton acceptor is the Ser-472.

Belongs to the IlvD/Edd family. In terms of assembly, homodimer. It depends on [2Fe-2S] cluster as a cofactor. Requires Mg(2+) as cofactor.

It carries out the reaction (2R)-2,3-dihydroxy-3-methylbutanoate = 3-methyl-2-oxobutanoate + H2O. It catalyses the reaction (2R,3R)-2,3-dihydroxy-3-methylpentanoate = (S)-3-methyl-2-oxopentanoate + H2O. It participates in amino-acid biosynthesis; L-isoleucine biosynthesis; L-isoleucine from 2-oxobutanoate: step 3/4. Its pathway is amino-acid biosynthesis; L-valine biosynthesis; L-valine from pyruvate: step 3/4. Functions in the biosynthesis of branched-chain amino acids. Catalyzes the dehydration of (2R,3R)-2,3-dihydroxy-3-methylpentanoate (2,3-dihydroxy-3-methylvalerate) into 2-oxo-3-methylpentanoate (2-oxo-3-methylvalerate) and of (2R)-2,3-dihydroxy-3-methylbutanoate (2,3-dihydroxyisovalerate) into 2-oxo-3-methylbutanoate (2-oxoisovalerate), the penultimate precursor to L-isoleucine and L-valine, respectively. The chain is Dihydroxy-acid dehydratase from Saccharolobus islandicus (strain L.S.2.15 / Lassen #1) (Sulfolobus islandicus).